The primary structure comprises 119 residues: Small ribosomal subunit protein bS16 (119 aa).

The protein belongs to the bacterial ribosomal protein bS16 family.

The chain is Small ribosomal subunit protein bS16 from Amoebophilus asiaticus (strain 5a2).